Consider the following 305-residue polypeptide: Heme A synthase (305 aa).

The Cytoplasmic portion of the chain corresponds to 1–6 (MKKFLK). A helical transmembrane segment spans residues 7-27 (VWSVLTIICMTVVVFGGALVT). Topologically, residues 28 to 63 (KTGSADGCGNSWPLCNGQLVRLTDVTPEKLIEFMHR) are extracellular. Residues C35 and C42 are joined by a disulfide bond. E59 is a catalytic residue. Residue H62 participates in heme o binding. A helical transmembrane segment spans residues 64–84 (MTTGISSIFVIVLAICAWIYM). Residues 85-92 (KNRRETKP) lie on the Cytoplasmic side of the membrane. A helical transmembrane segment spans residues 93–113 (LAIIAVLFLIIQALMGMAAVV). The Extracellular portion of the chain corresponds to 114 to 122 (WGQNPYIMA). Residues 123–143 (LHFGISIICYASIVLLALMIF) form a helical membrane-spanning segment. H124 is a heme o binding site. The Cytoplasmic segment spans residues 144 to 160 (EVDRKFDARNLVMGTKL). The chain crosses the membrane as a helical span at residues 161–181 (RINIYALTIYTYLAVYTGALV). Topologically, residues 182–212 (RHEKASMAVPVWPFENGKFIMPDSVQDYVQY) are extracellular. A helical transmembrane segment spans residues 213–233 (FHRVAAFILIVWLLYVTWLVF). Heme b is bound at residue H214. Over 234-240 (RDYRRYR) the chain is Cytoplasmic. A helical transmembrane segment spans residues 241 to 261 (VLTFSMVLSLLFIALQAVTGA). Over 262 to 271 (LSVYTGVNLY) the chain is Extracellular. The helical transmembrane segment at 272-292 (IALAHSLIITMLFALLCYLCL) threads the bilayer. H276 provides a ligand contact to heme b. The Cytoplasmic portion of the chain corresponds to 293-305 (LASRSKSNRLRIK).

Belongs to the COX15/CtaA family. Type 1 subfamily. Interacts with CtaB. The cofactor is heme b.

The protein localises to the cell membrane. The catalysed reaction is Fe(II)-heme o + 2 A + H2O = Fe(II)-heme a + 2 AH2. It functions in the pathway porphyrin-containing compound metabolism; heme A biosynthesis; heme A from heme O: step 1/1. Functionally, catalyzes the conversion of heme O to heme A by two successive hydroxylations of the methyl group at C8. The first hydroxylation forms heme I, the second hydroxylation results in an unstable dihydroxymethyl group, which spontaneously dehydrates, resulting in the formyl group of heme A. The chain is Heme A synthase from Listeria welshimeri serovar 6b (strain ATCC 35897 / DSM 20650 / CCUG 15529 / CIP 8149 / NCTC 11857 / SLCC 5334 / V8).